The following is a 209-amino-acid chain: Small ribosomal subunit protein uS4 (209 aa).

An S4 RNA-binding domain is found at 98 to 164 (RRLDNVVYRL…LPIKNAIELN (67 aa)).

This sequence belongs to the universal ribosomal protein uS4 family. In terms of assembly, part of the 30S ribosomal subunit. Contacts protein S5. The interaction surface between S4 and S5 is involved in control of translational fidelity.

Its function is as follows. One of the primary rRNA binding proteins, it binds directly to 16S rRNA where it nucleates assembly of the body of the 30S subunit. With S5 and S12 plays an important role in translational accuracy. The chain is Small ribosomal subunit protein uS4 from Thermosipho melanesiensis (strain DSM 12029 / CIP 104789 / BI429).